A 410-amino-acid chain; its full sequence is Arginine deiminase (410 aa).

Cys400 functions as the Amidino-cysteine intermediate in the catalytic mechanism.

The protein belongs to the arginine deiminase family.

It is found in the cytoplasm. It carries out the reaction L-arginine + H2O = L-citrulline + NH4(+). It participates in amino-acid degradation; L-arginine degradation via ADI pathway; carbamoyl phosphate from L-arginine: step 1/2. The sequence is that of Arginine deiminase from Bacillus thuringiensis subsp. konkukian (strain 97-27).